The sequence spans 143 residues: RVFHLFDYPPLNTGDLQLKAKIKPFIFTSNNSFLSYNDVTVKHNDVPAGDPFKASAVIKDTNPNPYIAAGVTAILNDVLGRFAVPLMNDLKTGKTDGWDLMMKYDKHSTRSYMALAYTPSDHLNLPKKPLPTDVINWLETFDK.

It belongs to the flavin monoamine oxidase family. FAD is required as a cofactor.

The enzyme catalyses an L-alpha-amino acid + O2 + H2O = a 2-oxocarboxylate + H2O2 + NH4(+). Functionally, cytotoxic L-amino acid oxidase with high oxidase activity towards DL-methionine and L-methionine, L-phenylalanine, DL-norleucine, L-isoleucine, L-arginine, L-tyrosine, and DL-leucine. Shows relatively low activity towards DL-lysine and L-lysine, DL-asparagine, DL-valine, L-histidine, DL-threonine, DL-tryptophan, and L-glutamic acid; and no activity towards L-cysteine, L-glycine, L-proline, L-oxyproline, DL-serine, and DL-aspartic acid. Does not use benzylamine, ethanolamine, diethylamine, meta- and para-phenylendiamine, ortho-, meta- and para-aminophenols, or putrescin as a substrate. Acts as a toxin by inducing chromatin condensation, as well as DNA and nucleus fragmentation, which are typical for apoptosis. Probably induces cell damage indirectly via the generation of free radicals and oxidant agents that can trigger cell impairment and apoptosis by a caspase-independent pathway. This is Cytotoxic L-amino-acid oxidase from Amanita phalloides (Death cap).